Here is a 64-residue protein sequence, read N- to C-terminus: Large ribosomal subunit protein bL35 (64 aa).

It belongs to the bacterial ribosomal protein bL35 family.

This chain is Large ribosomal subunit protein bL35, found in Helicobacter hepaticus (strain ATCC 51449 / 3B1).